A 63-amino-acid polypeptide reads, in one-letter code: Large ribosomal subunit protein uL29 (63 aa).

The protein belongs to the universal ribosomal protein uL29 family.

In Pelagibacter ubique (strain HTCC1062), this protein is Large ribosomal subunit protein uL29.